A 628-amino-acid polypeptide reads, in one-letter code: Monoterpene synthase like 2, chloroplastic (628 aa).

Mg(2+)-binding residues include aspartate 379, aspartate 383, and aspartate 531. Residues 379–383 (DDIYD) carry the DDXXD motif motif.

It belongs to the terpene synthase family. Tpsd subfamily. Mg(2+) serves as cofactor. The cofactor is Mn(2+).

Its subcellular location is the plastid. It localises to the chloroplast. Its pathway is terpene metabolism; oleoresin biosynthesis. It functions in the pathway secondary metabolite biosynthesis; terpenoid biosynthesis. Monoterpene synthase (TPS) involved in the biosynthesis of monoterpene natural products included in conifer oleoresin secretions and volatile emissions; these compounds contribute to biotic and abiotic stress defense against herbivores and pathogens. The polypeptide is Monoterpene synthase like 2, chloroplastic (Pinus banksiana (Jack pine)).